Reading from the N-terminus, the 647-residue chain is 2',3'-cyclic-nucleotide 2'-phosphodiesterase/3'-nucleotidase (647 aa).

A signal peptide spans 1–19; sequence MIKFSATLLATLIAASVNA. A divalent metal cation is bound by residues Asp-31, His-33, Asp-76, Asn-116, His-225, His-257, and His-259. Residues Tyr-440 and 544–550 contribute to the substrate site; that span reads YRAYGGK.

Belongs to the 5'-nucleotidase family. A divalent metal cation is required as a cofactor.

The protein resides in the periplasm. It catalyses the reaction a nucleoside 2',3'-cyclic phosphate + H2O = a nucleoside 3'-phosphate + H(+). It carries out the reaction a ribonucleoside 3'-phosphate + H2O = a ribonucleoside + phosphate. Its function is as follows. This bifunctional enzyme catalyzes two consecutive reactions during ribonucleic acid degradation. Converts a 2',3'-cyclic nucleotide to a 3'-nucleotide and then the 3'-nucleotide to the corresponding nucleoside and phosphate. The polypeptide is 2',3'-cyclic-nucleotide 2'-phosphodiesterase/3'-nucleotidase (cpdB) (Salmonella typhimurium (strain LT2 / SGSC1412 / ATCC 700720)).